An 813-amino-acid chain; its full sequence is Ribonuclease R (813 aa).

In terms of domain architecture, RNB spans 260–587 (RVDLRDLPLV…LHRAIKYLLA (328 aa)). K544 bears the N6-acetyllysine; by PatZ mark. The region spanning 644–725 (GNVFKGVISS…DERKIDFSLI (82 aa)) is the S1 motif domain. Residues 731-813 (PRNVGKTARE…KRAAKKKVAE (83 aa)) are disordered. Basic and acidic residues-rich tracts occupy residues 737-749 (TARE…DAGK) and 761-774 (VNFE…GEKK). Over residues 775–791 (TKPKAAKKDARKAKKPS) the composition is skewed to basic residues. Residues 792–801 (AKTQKIAAAT) are compositionally biased toward low complexity. Residues 802 to 813 (KAKRAAKKKVAE) show a composition bias toward basic residues.

Belongs to the RNR ribonuclease family. RNase R subfamily. As to quaternary structure, monomer. Requires Mg(2+) as cofactor. In terms of processing, acetylated at Lys-544 by PatZ during exponential growth phase. Acetylation alters RNase R structure and enhances binding of SsrA/tmRNA and SmpB, leading to instability and degradation of RNase R. Not acetylated and stable in stationary phase cells.

It is found in the cytoplasm. It carries out the reaction Exonucleolytic cleavage in the 3'- to 5'-direction to yield nucleoside 5'-phosphates.. With respect to regulation, stimulated by the presence of a monovalent cation. Highly unstable in exponential growth phase. This instability is due to the binding of SsrA/tmRNA and its associated protein SmpB to the C-terminal region of RNase R. In contrast, RNase R becomes stabilized upon entry into stationary phase. The difference in stability between exponential and stationary phase is due to the acetylation of a single lysine residue. Its function is as follows. 3'-5' exoribonuclease that releases 5'-nucleoside monophosphates and is involved in maturation of structured RNAs (rRNAs, tRNAs and SsrA/tmRNA). In stationary phase, involved in the post-transcriptional regulation of ompA mRNA stability. Shortens RNA processively to di- and trinucleotides. In vitro, exhibits helicase activity, which is independent of its RNase activity. RNases 2 and R (rnb and this entry) contribute to rRNA degradation during starvation, while RNase R and PNPase (this entry and pnp) are the major contributors to quality control of rRNA during steady state growth. Required for the expression of virulence genes in enteroinvasive strains of E.coli. In Escherichia coli (strain K12), this protein is Ribonuclease R (rnr).